We begin with the raw amino-acid sequence, 313 residues long: Beta-ribofuranosylphenol 5'-phosphate synthase (313 aa).

The protein belongs to the beta-RFA-P synthase family. In terms of assembly, homodimer.

The enzyme catalyses 5-phospho-alpha-D-ribose 1-diphosphate + 4-hydroxybenzoate + H(+) = 4-(beta-D-ribofuranosyl)phenol 5'-phosphate + CO2 + diphosphate. The catalysed reaction is 4-aminobenzoate + 5-phospho-alpha-D-ribose 1-diphosphate + H(+) = 4-(beta-D-ribofuranosyl)aminobenzene 5'-phosphate + CO2 + diphosphate. It participates in cofactor biosynthesis; 5,6,7,8-tetrahydromethanopterin biosynthesis. Functionally, catalyzes the condensation of 4-hydroxybenzoate (HB) with 5-phospho-alpha-D-ribose 1-diphosphate (PRPP) to produce beta-ribofuranosylphenol 5'-phosphate (beta-RFH-P). Also catalyzes the condensation of 4-aminobenzoate (pABA) with PRPP to produce beta-ribofuranosylaminobenzene 5'-phosphate (beta-RFA-P). The sequence is that of Beta-ribofuranosylphenol 5'-phosphate synthase from Archaeoglobus fulgidus (strain ATCC 49558 / DSM 4304 / JCM 9628 / NBRC 100126 / VC-16).